Consider the following 387-residue polypeptide: Low specificity L-threonine aldolase (387 aa).

Position 213 is an N6-(pyridoxal phosphate)lysine (Lys-213). Residue Lys-228 forms a Glycyl lysine isopeptide (Lys-Gly) (interchain with G-Cter in ubiquitin) linkage. Phosphoserine is present on residues Ser-367 and Ser-369. Residue Thr-370 is modified to Phosphothreonine.

Belongs to the threonine aldolase family. In terms of assembly, homotetramer. Pyridoxal 5'-phosphate is required as a cofactor.

It catalyses the reaction L-threonine = acetaldehyde + glycine. The enzyme catalyses L-allo-threonine = acetaldehyde + glycine. The protein operates within amino-acid biosynthesis; glycine biosynthesis; glycine from L-allo-threonine: step 1/1. Its pathway is amino-acid degradation; L-threonine degradation via aldolase pathway; acetaldehyde and glycine from L-threonine: step 1/1. Its function is as follows. Catalyzes the cleavage of L-allo-threonine and L-threonine to glycine and acetaldehyde. The polypeptide is Low specificity L-threonine aldolase (GLY1) (Saccharomyces cerevisiae (strain ATCC 204508 / S288c) (Baker's yeast)).